A 259-amino-acid polypeptide reads, in one-letter code: 1,2-dihydroxy-1,2-dihydronaphthalene dehydrogenase (259 aa).

Position 8–32 (8–32) interacts with NAD(+); the sequence is SITGAGSGIGLELVRSFKSAGYYVS. Serine 140 is a substrate binding site. Tyrosine 153 (proton acceptor) is an active-site residue.

Belongs to the short-chain dehydrogenases/reductases (SDR) family.

It carries out the reaction (1R,2S)-1,2-dihydronaphthalene-1,2-diol + NAD(+) = naphthalene-1,2-diol + NADH + H(+). The enzyme catalyses cis-1,2-dihydroxy-1,2-dihydrodibenzothiophene + NAD(+) = 1,2-dihydroxydibenzothiophene + NADH + H(+). Its pathway is aromatic compound metabolism; naphthalene degradation. In terms of biological role, catalyzes the oxidation of naphthalene dihydrodiol into 1,2-dihydroxynaphthalene. In Pseudomonas sp. (strain C18), this protein is 1,2-dihydroxy-1,2-dihydronaphthalene dehydrogenase (doxE).